The sequence spans 94 residues: MNHCLHSNTLAKIVCTVTLITLYFYFFSTRFNELIELAVQMFFALIGLFWVFIVSPFSRKVQISERFKQKSENARIVGMIDFVLEQKYKKSISE.

2 consecutive transmembrane segments (helical) span residues 9 to 29 and 34 to 54; these read TLAK…FFST and LIEL…VFIV.

The protein localises to the cell membrane. This is an uncharacterized protein from Bacillus subtilis (strain 168).